The sequence spans 505 residues: AMP phosphorylase (505 aa).

AMP is bound by residues G170, 196–201 (SRAITS), and T205. The active-site Proton donor is D258. Residues S266 and K290 each contribute to the AMP site.

Belongs to the thymidine/pyrimidine-nucleoside phosphorylase family. Type 2 subfamily.

It carries out the reaction AMP + phosphate = alpha-D-ribose 1,5-bisphosphate + adenine. It catalyses the reaction CMP + phosphate = cytosine + alpha-D-ribose 1,5-bisphosphate. The catalysed reaction is UMP + phosphate = alpha-D-ribose 1,5-bisphosphate + uracil. Functionally, catalyzes the conversion of AMP and phosphate to adenine and ribose 1,5-bisphosphate (R15P). Exhibits phosphorylase activity toward CMP and UMP in addition to AMP. Functions in an archaeal AMP degradation pathway, together with R15P isomerase and RubisCO. This is AMP phosphorylase from Methanococcus maripaludis (strain C6 / ATCC BAA-1332).